The chain runs to 278 residues: Bifunctional protein FolD (278 aa).

Residues 165-167 (GRS), Ser190, and Thr231 contribute to the NADP(+) site.

This sequence belongs to the tetrahydrofolate dehydrogenase/cyclohydrolase family. In terms of assembly, homodimer.

It carries out the reaction (6R)-5,10-methylene-5,6,7,8-tetrahydrofolate + NADP(+) = (6R)-5,10-methenyltetrahydrofolate + NADPH. The catalysed reaction is (6R)-5,10-methenyltetrahydrofolate + H2O = (6R)-10-formyltetrahydrofolate + H(+). The protein operates within one-carbon metabolism; tetrahydrofolate interconversion. In terms of biological role, catalyzes the oxidation of 5,10-methylenetetrahydrofolate to 5,10-methenyltetrahydrofolate and then the hydrolysis of 5,10-methenyltetrahydrofolate to 10-formyltetrahydrofolate. In Clostridium acetobutylicum (strain ATCC 824 / DSM 792 / JCM 1419 / IAM 19013 / LMG 5710 / NBRC 13948 / NRRL B-527 / VKM B-1787 / 2291 / W), this protein is Bifunctional protein FolD.